Consider the following 332-residue polypeptide: L-lactate dehydrogenase A chain (332 aa).

Residues 29-57 (GAVGMACAISILMKDLADELALVDVIEDK) and arginine 99 contribute to the NAD(+) site. The substrate site is built by arginine 106, asparagine 138, and arginine 169. Asparagine 138 is a binding site for NAD(+). The active-site Proton acceptor is the histidine 193. Threonine 248 lines the substrate pocket.

The protein belongs to the LDH/MDH superfamily. LDH family. In terms of assembly, homotetramer.

It localises to the cytoplasm. It carries out the reaction (S)-lactate + NAD(+) = pyruvate + NADH + H(+). It functions in the pathway fermentation; pyruvate fermentation to lactate; (S)-lactate from pyruvate: step 1/1. Interconverts simultaneously and stereospecifically pyruvate and lactate with concomitant interconversion of NADH and NAD(+). The protein is L-lactate dehydrogenase A chain (LDHA) of Trachemys scripta elegans (Red-eared slider turtle).